The following is a 444-amino-acid chain: MAPSIQSLSMIHDSQECIKPIPAFYCCYLLRSCVRHASLYIGSTPDPARRLAQHNGDRNGAAKRTLRENLRPWEMVAIVSGFTSRVAALQFEWAWQNTKVSRHADLDGNVIQELGVRICPRTGKGVKGTAKPRTSLTNILANLHLLLRSPYFSKWPVEVRFFSADVHRVWQVWLQRVDGLLNDGIRVVTDFALDGISEVERKELLAGAGRVGTLDVGYNSIKEYVEKSQFLLEDGERINCGVCKQRLILQHDIIAVCSHSSCHCAAHLSCLSSHFLKDKDSDSELIPREGTCPACYGKLEWLTMMKEISLRLRGQEEVNRLFRRRRQAGTPKGQGLKSVRGRGRGHSEDESDALQVSTGLDIVDLTPCSDDPWTIDCAIGELGGIAHRPGGESSGNDSDATITPEMETPPQRRRRNQNTRTQRLGLQKSATINLSDWDDAEVIE.

In terms of domain architecture, GIY-YIG spans 23-105 (AFYCCYLLRS…QNTKVSRHAD (83 aa)). The segment at 240–295 (CGVCKQRLILQHDIIAVCSHSSCHCAAHLSCLSSHFLKDKDSDSELIPREGTCPAC) adopts an SLX1-type zinc-finger fold. Disordered regions lie at residues 323-355 (RRRR…DALQ) and 386-444 (AHRP…EVIE).

Belongs to the SLX1 family. Forms a heterodimer with SLX4. A divalent metal cation is required as a cofactor.

The protein localises to the nucleus. Catalytic subunit of the SLX1-SLX4 structure-specific endonuclease that resolves DNA secondary structures generated during DNA repair and recombination. Has endonuclease activity towards branched DNA substrates, introducing single-strand cuts in duplex DNA close to junctions with ss-DNA. This Paracoccidioides brasiliensis (strain Pb18) protein is Structure-specific endonuclease subunit SLX1.